A 167-amino-acid polypeptide reads, in one-letter code: Putative C-type lectin-like domain family 1 (167 aa).

Residues 1–67 are Cytoplasmic-facing; it reads MVSNFFHVIQ…KYDCPFSGTS (67 aa). A helical; Signal-anchor for type II membrane protein transmembrane segment spans residues 68-88; the sequence is FVVFSLFLICAMAGDVVYADI. Residues 89 to 167 are Extracellular-facing; the sequence is KTVRTSPLEL…DITAMVRFNI (79 aa). N-linked (GlcNAc...) asparagine glycosylation is found at Asn-109, Asn-140, and Asn-149. The C-type lectin; atypical domain occupies 116–167; it reads SCPAKDWKVHKGKCYWIAETKKSWNKSQNDCAINNSYLMVIQDITAMVRFNI.

As to expression, expressed in spleen, lymph node, and tonsil. Lower expression in peripheral blood, bone marrow, and colon. No expression detected in thymus. Highly expressed in dendritic and B-cells.

It is found in the cell membrane. May function in mediating immune cell-cell interactions. May act as a T-cell costimulatory molecule, enhancing anti-CD3-induced proliferation. May play a role in the interaction of dendritic cells with T-cells and the cells of the adaptive immune response. The chain is Putative C-type lectin-like domain family 1 from Homo sapiens (Human).